Reading from the N-terminus, the 174-residue chain is Small ribosomal subunit protein uS5 (174 aa).

The 64-residue stretch at 18 to 81 (WQERVIQIRR…ADGKKHLIDI (64 aa)) folds into the S5 DRBM domain.

Belongs to the universal ribosomal protein uS5 family. As to quaternary structure, part of the 30S ribosomal subunit. Contacts proteins S4 and S8.

In terms of biological role, with S4 and S12 plays an important role in translational accuracy. Functionally, located at the back of the 30S subunit body where it stabilizes the conformation of the head with respect to the body. This Trichormus variabilis (strain ATCC 29413 / PCC 7937) (Anabaena variabilis) protein is Small ribosomal subunit protein uS5.